The primary structure comprises 102 residues: Small ribosomal subunit protein uS10 (102 aa).

Belongs to the universal ribosomal protein uS10 family. In terms of assembly, part of the 30S ribosomal subunit.

In terms of biological role, involved in the binding of tRNA to the ribosomes. The protein is Small ribosomal subunit protein uS10 of Xanthobacter autotrophicus (strain ATCC BAA-1158 / Py2).